Reading from the N-terminus, the 226-residue chain is Large ribosomal subunit protein uL3 (226 aa).

Residue Gln160 is modified to N5-methylglutamine.

Belongs to the universal ribosomal protein uL3 family. In terms of assembly, part of the 50S ribosomal subunit. Forms a cluster with proteins L14 and L19. In terms of processing, methylated by PrmB.

Its function is as follows. One of the primary rRNA binding proteins, it binds directly near the 3'-end of the 23S rRNA, where it nucleates assembly of the 50S subunit. This chain is Large ribosomal subunit protein uL3, found in Leptothrix cholodnii (strain ATCC 51168 / LMG 8142 / SP-6) (Leptothrix discophora (strain SP-6)).